The chain runs to 33 residues: uncharacterized protein (33 aa).

This is an uncharacterized protein from Saccharomyces cerevisiae (strain ATCC 204508 / S288c) (Baker's yeast).